The sequence spans 350 residues: Integrin beta-1-binding protein 2 (350 aa).

4 residues coordinate Zn(2+): Cys-5, Cys-10, Cys-24, and His-27. A CHORD 1 domain is found at 5–64 (CYNKGCGQHFDPNTNLPDSCRYHPGVPIFHDALKGWSCCRKRTVDFSEFLNIKGCTVGLH). The short motif at 28–31 (PGVP) is the SH3-binding element. Residues Cys-42, Cys-43, Cys-59, and His-64 each contribute to the Zn(2+) site. The SH3-binding signature appears at 70 to 79 (PEVPPQPEGP). Residues 72 to 92 (VPPQPEGPATSSLQEQKPLNT) form a disordered region. The span at 80–92 (ATSSLQEQKPLNT) shows a compositional bias: polar residues. 2 residues coordinate Zn(2+): Cys-150 and Cys-155. The region spanning 150 to 209 (CQNPGCDAVYQGPESDATPCTYHPGAPRFHEGMKSWSCCGIQTLDFGAFLAQPGCRVGRH) is the CHORD 2 domain. Positions 159–162 (YQGP) match the SH2-binding motif. Residues Cys-169 and His-172 each coordinate Zn(2+). Positions 173-176 (PGAP) match the SH3-binding motif. Cys-187, Cys-188, Cys-204, and His-209 together coordinate Zn(2+). Residues 216-305 (PASCRHDWHQ…ADPGSWAQLE (90 aa)) form the CS domain. The SH2-binding motif lies at 235–238 (YGQI). A disordered region spans residues 317–350 (GVLLEMDEEESEDSDDDLSWTEEEDEEEEEAMGE). Residues 321–350 (EMDEEESEDSDDDLSWTEEEDEEEEEAMGE) show a composition bias toward acidic residues.

As to quaternary structure, interacts with beta-1 integrin subunit. This interaction is regulated by divalent cations, and it occurs only in absence of calcium. As to expression, expressed in skeletal and cardiac muscles but not in other tissues. Is localized in rows flanking the Z line containing alpha-actinin.

In terms of biological role, may play a role during maturation and/or organization of muscles cells. The chain is Integrin beta-1-binding protein 2 (Itgb1bp2) from Mus musculus (Mouse).